Here is an 84-residue protein sequence, read N- to C-terminus: Small ribosomal subunit protein uS15 (84 aa).

The protein belongs to the universal ribosomal protein uS15 family. Part of the 30S ribosomal subunit. Forms a bridge to the 50S subunit in the 70S ribosome, contacting the 23S rRNA.

Its function is as follows. One of the primary rRNA binding proteins, it binds directly to 16S rRNA where it helps nucleate assembly of the platform of the 30S subunit by binding and bridging several RNA helices of the 16S rRNA. Functionally, forms an intersubunit bridge (bridge B4) with the 23S rRNA of the 50S subunit in the ribosome. This is Small ribosomal subunit protein uS15 from Thermosipho africanus (strain TCF52B).